Reading from the N-terminus, the 215-residue chain is Octanoyltransferase (215 aa).

The 176-residue stretch at 31–206 folds into the BPL/LPL catalytic domain; sequence TTAPDEIWLV…QLVKHLDYAE (176 aa). Residues 70-77, 137-139, and 150-152 each bind substrate; these read RGGQVTYH, SLG, and GLA. The active-site Acyl-thioester intermediate is Cys-168.

This sequence belongs to the LipB family.

It is found in the cytoplasm. The enzyme catalyses octanoyl-[ACP] + L-lysyl-[protein] = N(6)-octanoyl-L-lysyl-[protein] + holo-[ACP] + H(+). It functions in the pathway protein modification; protein lipoylation via endogenous pathway; protein N(6)-(lipoyl)lysine from octanoyl-[acyl-carrier-protein]: step 1/2. Catalyzes the transfer of endogenously produced octanoic acid from octanoyl-acyl-carrier-protein onto the lipoyl domains of lipoate-dependent enzymes. Lipoyl-ACP can also act as a substrate although octanoyl-ACP is likely to be the physiological substrate. The chain is Octanoyltransferase from Pseudomonas fluorescens (strain Pf0-1).